The following is a 470-amino-acid chain: Cannabinoid receptor 1 (470 aa).

Topologically, residues Met-1 to Ala-121 are extracellular. Residues Lys-2–Leu-23 form a required for mitochondrial localization region. N-linked (GlcNAc...) asparagine glycosylation is found at Asn-78 and Asn-84. Residues Leu-122–Val-142 form a helical membrane-spanning segment. Residues Gln-143–His-154 are Cytoplasmic-facing. Residues Phe-155 to Val-175 traverse the membrane as a helical segment. Topologically, residues Asp-176–Asn-187 are extracellular. The helical transmembrane segment at Val-188 to Phe-208 threads the bilayer. Residues Leu-209–Lys-232 lie on the Cytoplasmic side of the membrane. A helical transmembrane segment spans residues Ala-233–Phe-253. Topologically, residues Gly-254 to Met-277 are extracellular. Residues Phe-278–Leu-298 form a helical membrane-spanning segment. Residues Trp-299 to Thr-344 lie on the Cytoplasmic side of the membrane. The helical transmembrane segment at Leu-345–Tyr-365 threads the bilayer. At Asp-366–Thr-377 the chain is on the extracellular side. Residue Asn-372 is glycosylated (N-linked (GlcNAc...) asparagine). Residues Val-378–Ala-398 traverse the membrane as a helical segment. At Leu-399–Val-470 the chain is on the cytoplasmic side. Residue Cys-415 is the site of S-palmitoyl cysteine attachment.

The protein belongs to the G-protein coupled receptor 1 family. In terms of processing, palmitoylation at Cys-415 is important for recruitment at both plasma membrane and lipid rafts and association with G protein alpha subunits. In terms of tissue distribution, expressed in neurons, especially in the olfactory bulbs, telencephalic pallium, and hypothalamus and also in the midbrain and hindbrain (in the mesencephalic tegmentum and dorsolateral rhombencephalon). Expressed also in the spinal cord.

It localises to the cell membrane. Its subcellular location is the mitochondrion outer membrane. It is found in the cell projection. The protein resides in the axon. The protein localises to the presynapse. Its function is as follows. G-protein coupled receptor for cannabinoids. Mediates many cannabinoid-induced effects in the central nervous system (CNS), as well as in peripheral tissues. Regulates cellular respiration and energy production in response to cannabinoids. Signaling typically involves reduction in cyclic AMP. In Xenopus laevis (African clawed frog), this protein is Cannabinoid receptor 1 (cnr1).